The primary structure comprises 114 residues: Holo-[acyl-carrier-protein] synthase (114 aa).

Mg(2+) is bound by residues Asp-8 and Glu-58.

It belongs to the P-Pant transferase superfamily. AcpS family. Requires Mg(2+) as cofactor.

It is found in the cytoplasm. The catalysed reaction is apo-[ACP] + CoA = holo-[ACP] + adenosine 3',5'-bisphosphate + H(+). In terms of biological role, transfers the 4'-phosphopantetheine moiety from coenzyme A to a Ser of acyl-carrier-protein. This is Holo-[acyl-carrier-protein] synthase from Mycoplasma genitalium (strain ATCC 33530 / DSM 19775 / NCTC 10195 / G37) (Mycoplasmoides genitalium).